The chain runs to 634 residues: Threonine--tRNA ligase (634 aa).

A TGS domain is found at 1–61; it reads MFEVKLKDGS…DSDCEVQFVK (61 aa). The tract at residues 242–532 is catalytic; the sequence is DHRKIGKEMG…LIEHYAGKFP (291 aa). Zn(2+) is bound by residues Cys-333, His-384, and His-509.

It belongs to the class-II aminoacyl-tRNA synthetase family. As to quaternary structure, homodimer. Zn(2+) is required as a cofactor.

The protein localises to the cytoplasm. It catalyses the reaction tRNA(Thr) + L-threonine + ATP = L-threonyl-tRNA(Thr) + AMP + diphosphate + H(+). Functionally, catalyzes the attachment of threonine to tRNA(Thr) in a two-step reaction: L-threonine is first activated by ATP to form Thr-AMP and then transferred to the acceptor end of tRNA(Thr). Also edits incorrectly charged L-seryl-tRNA(Thr). The polypeptide is Threonine--tRNA ligase (Finegoldia magna (strain ATCC 29328 / DSM 20472 / WAL 2508) (Peptostreptococcus magnus)).